A 234-amino-acid chain; its full sequence is Large ribosomal subunit protein uL1 (234 aa).

It belongs to the universal ribosomal protein uL1 family. As to quaternary structure, part of the 50S ribosomal subunit.

In terms of biological role, binds directly to 23S rRNA. The L1 stalk is quite mobile in the ribosome, and is involved in E site tRNA release. Its function is as follows. Protein L1 is also a translational repressor protein, it controls the translation of the L11 operon by binding to its mRNA. This Klebsiella pneumoniae (strain 342) protein is Large ribosomal subunit protein uL1.